Reading from the N-terminus, the 145-residue chain is Protoporphyrinogen IX oxidase (145 aa).

Transmembrane regions (helical) follow at residues 6–26, 61–81, 83–103, and 123–143; these read LWFK…LLYL, AMIS…FVAL, TWFQ…GLLA, and IVNE…IVKP. His12 is a heme binding site. Lys88 is a heme binding site.

Belongs to the HemJ family. In terms of assembly, homodimer. Heme b is required as a cofactor.

It is found in the cell membrane. The catalysed reaction is protoporphyrinogen IX + 3 A = protoporphyrin IX + 3 AH2. It functions in the pathway porphyrin-containing compound metabolism; protoporphyrin-IX biosynthesis; protoporphyrin-IX from protoporphyrinogen-IX: step 1/1. Catalyzes the oxidation of protoporphyrinogen IX to protoporphyrin IX. Is involved in the biosynthesis of tetrapyrrole molecules like heme. Does not use oxygen or artificial electron acceptors such as menadione or benzoquinone. This Rickettsia prowazekii (strain Madrid E) protein is Protoporphyrinogen IX oxidase.